We begin with the raw amino-acid sequence, 131 residues long: Small ribosomal subunit protein uS11 (131 aa).

The protein belongs to the universal ribosomal protein uS11 family. Part of the 30S ribosomal subunit. Interacts with proteins S7 and S18. Binds to IF-3.

Located on the platform of the 30S subunit, it bridges several disparate RNA helices of the 16S rRNA. Forms part of the Shine-Dalgarno cleft in the 70S ribosome. The chain is Small ribosomal subunit protein uS11 from Geobacter sulfurreducens (strain ATCC 51573 / DSM 12127 / PCA).